The primary structure comprises 37 residues: Cytochrome b6-f complex subunit 5 (37 aa).

Residues 5-25 (LLSGIVLGLVPVTIAGLFVTA) traverse the membrane as a helical segment.

This sequence belongs to the PetG family. In terms of assembly, the 4 large subunits of the cytochrome b6-f complex are cytochrome b6, subunit IV (17 kDa polypeptide, PetD), cytochrome f and the Rieske protein, while the 4 small subunits are PetG, PetL, PetM and PetN. The complex functions as a dimer.

It is found in the plastid. The protein localises to the chloroplast thylakoid membrane. In terms of biological role, component of the cytochrome b6-f complex, which mediates electron transfer between photosystem II (PSII) and photosystem I (PSI), cyclic electron flow around PSI, and state transitions. PetG is required for either the stability or assembly of the cytochrome b6-f complex. The polypeptide is Cytochrome b6-f complex subunit 5 (Stigeoclonium helveticum (Green alga)).